The chain runs to 201 residues: Probable molybdenum cofactor guanylyltransferase (201 aa).

Residues 6–8, Lys-18, Asp-67, and Asp-92 each bind GTP; that span reads LAG. Asp-92 serves as a coordination point for Mg(2+).

The protein belongs to the MobA family. It depends on Mg(2+) as a cofactor.

It is found in the cytoplasm. The catalysed reaction is Mo-molybdopterin + GTP + H(+) = Mo-molybdopterin guanine dinucleotide + diphosphate. Transfers a GMP moiety from GTP to Mo-molybdopterin (Mo-MPT) cofactor (Moco or molybdenum cofactor) to form Mo-molybdopterin guanine dinucleotide (Mo-MGD) cofactor. This is Probable molybdenum cofactor guanylyltransferase from Thermococcus kodakarensis (strain ATCC BAA-918 / JCM 12380 / KOD1) (Pyrococcus kodakaraensis (strain KOD1)).